Reading from the N-terminus, the 427-residue chain is Glutamate-1-semialdehyde 2,1-aminomutase (427 aa).

N6-(pyridoxal phosphate)lysine is present on Lys-265.

It belongs to the class-III pyridoxal-phosphate-dependent aminotransferase family. HemL subfamily. As to quaternary structure, homodimer. Pyridoxal 5'-phosphate serves as cofactor.

It is found in the cytoplasm. It catalyses the reaction (S)-4-amino-5-oxopentanoate = 5-aminolevulinate. It participates in porphyrin-containing compound metabolism; protoporphyrin-IX biosynthesis; 5-aminolevulinate from L-glutamyl-tRNA(Glu): step 2/2. The polypeptide is Glutamate-1-semialdehyde 2,1-aminomutase (Burkholderia mallei (strain NCTC 10229)).